The chain runs to 253 residues: Imidazole glycerol phosphate synthase subunit HisF (253 aa).

Residues Asp-11 and Asp-130 contribute to the active site.

It belongs to the HisA/HisF family. In terms of assembly, heterodimer of HisH and HisF.

Its subcellular location is the cytoplasm. It catalyses the reaction 5-[(5-phospho-1-deoxy-D-ribulos-1-ylimino)methylamino]-1-(5-phospho-beta-D-ribosyl)imidazole-4-carboxamide + L-glutamine = D-erythro-1-(imidazol-4-yl)glycerol 3-phosphate + 5-amino-1-(5-phospho-beta-D-ribosyl)imidazole-4-carboxamide + L-glutamate + H(+). Its pathway is amino-acid biosynthesis; L-histidine biosynthesis; L-histidine from 5-phospho-alpha-D-ribose 1-diphosphate: step 5/9. Its function is as follows. IGPS catalyzes the conversion of PRFAR and glutamine to IGP, AICAR and glutamate. The HisF subunit catalyzes the cyclization activity that produces IGP and AICAR from PRFAR using the ammonia provided by the HisH subunit. This Paracoccus denitrificans (strain Pd 1222) protein is Imidazole glycerol phosphate synthase subunit HisF.